Consider the following 186-residue polypeptide: Lipid A acyltransferase PagP (186 aa).

The first 25 residues, 1 to 25 (MNVSKYVAIFSFVFIQLISVGKVFA), serve as a signal peptide directing secretion. Active-site residues include H58, D101, and S102.

Belongs to the lipid A palmitoyltransferase family. As to quaternary structure, homodimer.

It is found in the cell outer membrane. The enzyme catalyses a lipid A + a 1,2-diacyl-sn-glycero-3-phosphocholine = a hepta-acyl lipid A + a 2-acyl-sn-glycero-3-phosphocholine. The catalysed reaction is a lipid IVA + a 1,2-diacyl-sn-glycero-3-phosphocholine = a lipid IVB + a 2-acyl-sn-glycero-3-phosphocholine. It carries out the reaction a lipid IIA + a 1,2-diacyl-sn-glycero-3-phosphocholine = a lipid IIB + a 2-acyl-sn-glycero-3-phosphocholine. Transfers a fatty acid residue from the sn-1 position of a phospholipid to the N-linked hydroxyfatty acid chain on the proximal unit of lipid A or its precursors. The chain is Lipid A acyltransferase PagP from Shigella flexneri serotype X (strain 2002017).